Consider the following 155-residue polypeptide: Protein-export protein SecB (155 aa).

This sequence belongs to the SecB family. As to quaternary structure, homotetramer, a dimer of dimers. One homotetramer interacts with 1 SecA dimer.

It localises to the cytoplasm. Functionally, one of the proteins required for the normal export of preproteins out of the cell cytoplasm. It is a molecular chaperone that binds to a subset of precursor proteins, maintaining them in a translocation-competent state. It also specifically binds to its receptor SecA. The polypeptide is Protein-export protein SecB (Klebsiella pneumoniae subsp. pneumoniae (strain ATCC 700721 / MGH 78578)).